The following is a 431-amino-acid chain: MLPTAVLLVLVVSVVAKDNATCDGPCGLRFRQNPQGGFRVVGGQAAQQGAWPWMVSLQIFTPRNNRRYHACGGVLLNAHWVLTAAHCFNNKQKVYEWRMVFGAQEIEYGTDKPVRPPLQERYVEKVVTHDQYNYMTEGNDIALLKITPPVPCGPFIGPGCLPNSKAGPPKAAQTCYVAGWGYVKENAPRPSPTLMEARVDLINLELCNSTQWYNGRITASNLCAGYPSGKIDTCQGDSGGPLMCRENQGEPFVVQGITSWGVGCARAKRPGIYTATWPFLDWIASRIGSNALRMIQPATPTPPTTRSPGVHQPPSAHPPWYFQHASGPPHPHPHPHPHPHPRPPQPPAAQAPPPPPPPPPPPPPPPPPPPPPPPPPPPASTKPPQALSFAKRLQQLVEVLKGGSTFSGAKRVDTAAAAAEATEIPEVTLAS.

An N-terminal signal peptide occupies residues methionine 1–alanine 16. The N-linked (GlcNAc...) asparagine glycan is linked to asparagine 19. 6 disulfides stabilise this stretch: cysteine 22–cysteine 152, cysteine 26–cysteine 160, cysteine 71–cysteine 87, cysteine 175–cysteine 244, cysteine 207–cysteine 223, and cysteine 234–cysteine 264. The region spanning valine 40–glycine 288 is the Peptidase S1 domain. Residues histidine 86 and aspartate 140 each act as charge relay system in the active site. Residue asparagine 208 is glycosylated (N-linked (GlcNAc...) asparagine). Serine 238 serves as the catalytic Charge relay system. The tract at residues isoleucine 295 to glutamine 385 is disordered. Residues proline 331–proline 341 are compositionally biased toward basic residues. Residues arginine 342–threonine 381 are compositionally biased toward pro residues. Residues alanine 351–serine 431 constitute a propeptide, pro-rich.

The protein belongs to the peptidase S1 family. In terms of assembly, heavy chain (catalytic) and a light chain linked by two disulfide bonds. Forms a heterodimer with SERPINA5.

It carries out the reaction Preferential cleavage: Arg-|-Xaa, Lys-|-Xaa.. With respect to regulation, inhibited by SERPINA5. Its function is as follows. Acrosin is the major protease of mammalian spermatozoa. It is a serine protease of trypsin-like cleavage specificity, it is synthesized in a zymogen form, proacrosin and stored in the acrosome. The polypeptide is Acrosin (ACR) (Oryctolagus cuniculus (Rabbit)).